A 120-amino-acid polypeptide reads, in one-letter code: ATP-dependent Clp protease adapter protein ClpS (120 aa).

The protein belongs to the ClpS family. As to quaternary structure, binds to the N-terminal domain of the chaperone ClpA.

Its function is as follows. Involved in the modulation of the specificity of the ClpAP-mediated ATP-dependent protein degradation. The protein is ATP-dependent Clp protease adapter protein ClpS of Pseudomonas fluorescens (strain ATCC BAA-477 / NRRL B-23932 / Pf-5).